Reading from the N-terminus, the 251-residue chain is Hydroxyacylglutathione hydrolase (251 aa).

Residues His-53, His-55, Asp-57, His-58, His-110, Asp-127, and His-165 each coordinate Zn(2+).

The protein belongs to the metallo-beta-lactamase superfamily. Glyoxalase II family. In terms of assembly, monomer. It depends on Zn(2+) as a cofactor.

It carries out the reaction an S-(2-hydroxyacyl)glutathione + H2O = a 2-hydroxy carboxylate + glutathione + H(+). Its pathway is secondary metabolite metabolism; methylglyoxal degradation; (R)-lactate from methylglyoxal: step 2/2. In terms of biological role, thiolesterase that catalyzes the hydrolysis of S-D-lactoyl-glutathione to form glutathione and D-lactic acid. This is Hydroxyacylglutathione hydrolase from Escherichia coli (strain SMS-3-5 / SECEC).